The primary structure comprises 328 residues: Aryl-hydrocarbon-interacting protein-like 1 (328 aa).

A PPIase FKBP-type domain is found at 53–145; the sequence is KQVGHPMHII…DLDELQKEPQ (93 aa). TPR repeat units follow at residues 178–211, 230–263, and 264–297; these read VPILHGEGNRLFKLGRYEEASNKYQEAIVCLRNL, NTLILNYCQCLLKKEEYYEVLEHTSDILRHHPGI, and VKAYYVRARAHAEVWNEAEAKADLEKVLELEPSM.

Directly interacts with NUB1.

Its subcellular location is the cytoplasm. The protein localises to the nucleus. In terms of biological role, may be important in protein trafficking and/or protein folding and stabilization. The chain is Aryl-hydrocarbon-interacting protein-like 1 (AIPL1) from Bos taurus (Bovine).